A 312-amino-acid chain; its full sequence is Acyl-CoA C20 Delta5-desaturase (312 aa).

A run of 2 helical transmembrane segments spans residues 45–65 and 69–89; these read VFHILFIGGLHVLCLFAPSTF and SFWVCFALYAICGVFGTTLSF. 5 residues coordinate Fe cation: histidine 90, histidine 95, histidine 127, histidine 130, and histidine 131. The short motif at 90-95 is the Histidine box-1 element; that stretch reads HRNLTH. The Histidine box-2 motif lies at 127–131; the sequence is HRYHH. The chain crosses the membrane as a helical span at residues 193 to 213; sequence LQAALLYLFGGFPFIVWGMAV. Fe cation contacts are provided by histidine 230, histidine 259, histidine 262, and histidine 263. The Histidine box-3 motif lies at 259 to 263; that stretch reads HNNHH.

It belongs to the fatty acid desaturase type 1 family. Fe(2+) serves as cofactor.

It localises to the membrane. The catalysed reaction is (11Z,14Z)-eicosadienoyl-CoA + AH2 + O2 = (5Z,11Z,14Z)-eicosatrienoyl-CoA + A + 2 H2O. The enzyme catalyses (11Z,14Z,17Z)-eicosatrienoyl-CoA + AH2 + O2 = (5Z,11Z,14Z,17Z)-eicosatetraenoyl-CoA + A + 2 H2O. The protein operates within lipid metabolism; polyunsaturated fatty acid biosynthesis. Catalyzes the desaturation of 20:2Delta(11,14) and 20:3Delta(11,14,17) to generate sciadonic acid (20:3Delta(5,11,14)) and juniperonic acid (20:4Delta(5,11,14,17)). This chain is Acyl-CoA C20 Delta5-desaturase, found in Anemone leveillei (Windflower).